We begin with the raw amino-acid sequence, 160 residues long: Ribosomal RNA large subunit methyltransferase H (160 aa).

Positions 76 and 108 each coordinate S-adenosyl-L-methionine.

Belongs to the RNA methyltransferase RlmH family. Homodimer.

The protein localises to the cytoplasm. The catalysed reaction is pseudouridine(1915) in 23S rRNA + S-adenosyl-L-methionine = N(3)-methylpseudouridine(1915) in 23S rRNA + S-adenosyl-L-homocysteine + H(+). Specifically methylates the pseudouridine at position 1915 (m3Psi1915) in 23S rRNA. This Afipia carboxidovorans (strain ATCC 49405 / DSM 1227 / KCTC 32145 / OM5) (Oligotropha carboxidovorans) protein is Ribosomal RNA large subunit methyltransferase H.